An 85-amino-acid chain; its full sequence is U4-theraphotoxin-Hhn1a (85 aa).

An N-terminal signal peptide occupies residues 1–22 (MKVTLIAILTCAAVLVLHTTAA). The propeptide occupies 23 to 48 (EELEAEGQLMEVGMPDTELAAVDEER). Disulfide bonds link Cys52–Cys66, Cys56–Cys77, and Cys71–Cys82.

This sequence belongs to the neurotoxin 12 (Hwtx-2) family. 02 (Hwtx-2) subfamily. Monomer. In terms of tissue distribution, expressed by the venom gland.

Its subcellular location is the secreted. Neurotoxin active on both insects and mammals. This chain is U4-theraphotoxin-Hhn1a, found in Cyriopagopus hainanus (Chinese bird spider).